We begin with the raw amino-acid sequence, 263 residues long: tRNA1(Val) (adenine(37)-N6)-methyltransferase (263 aa).

The protein belongs to the methyltransferase superfamily. tRNA (adenine-N(6)-)-methyltransferase family.

It localises to the cytoplasm. It catalyses the reaction adenosine(37) in tRNA1(Val) + S-adenosyl-L-methionine = N(6)-methyladenosine(37) in tRNA1(Val) + S-adenosyl-L-homocysteine + H(+). In terms of biological role, specifically methylates the adenine in position 37 of tRNA(1)(Val) (anticodon cmo5UAC). This chain is tRNA1(Val) (adenine(37)-N6)-methyltransferase, found in Salmonella choleraesuis (strain SC-B67).